A 210-amino-acid chain; its full sequence is Imidazole glycerol phosphate synthase subunit HisH (210 aa).

The Glutamine amidotransferase type-1 domain maps to 1–210; the sequence is MIAILDYGMG…KLLENFIRFI (210 aa). The active-site Nucleophile is C79. Residues H191 and E193 contribute to the active site.

In terms of assembly, heterodimer of HisH and HisF.

It is found in the cytoplasm. It catalyses the reaction 5-[(5-phospho-1-deoxy-D-ribulos-1-ylimino)methylamino]-1-(5-phospho-beta-D-ribosyl)imidazole-4-carboxamide + L-glutamine = D-erythro-1-(imidazol-4-yl)glycerol 3-phosphate + 5-amino-1-(5-phospho-beta-D-ribosyl)imidazole-4-carboxamide + L-glutamate + H(+). The enzyme catalyses L-glutamine + H2O = L-glutamate + NH4(+). It functions in the pathway amino-acid biosynthesis; L-histidine biosynthesis; L-histidine from 5-phospho-alpha-D-ribose 1-diphosphate: step 5/9. Functionally, IGPS catalyzes the conversion of PRFAR and glutamine to IGP, AICAR and glutamate. The HisH subunit catalyzes the hydrolysis of glutamine to glutamate and ammonia as part of the synthesis of IGP and AICAR. The resulting ammonia molecule is channeled to the active site of HisF. The polypeptide is Imidazole glycerol phosphate synthase subunit HisH (Leptospira interrogans serogroup Icterohaemorrhagiae serovar copenhageni (strain Fiocruz L1-130)).